We begin with the raw amino-acid sequence, 359 residues long: Sulfate/thiosulfate import ATP-binding protein CysA (359 aa).

The 235-residue stretch at 3–237 (VRVAGVRKEF…PNSPFVYGFI (235 aa)) folds into the ABC transporter domain. 35 to 42 (GPSGSGKT) provides a ligand contact to ATP.

This sequence belongs to the ABC transporter superfamily. Sulfate/tungstate importer (TC 3.A.1.6) family. As to quaternary structure, the complex is composed of two ATP-binding proteins (CysA), two transmembrane proteins (CysT and CysW) and a solute-binding protein (CysP).

It localises to the cell inner membrane. It catalyses the reaction sulfate(out) + ATP + H2O = sulfate(in) + ADP + phosphate + H(+). The enzyme catalyses thiosulfate(out) + ATP + H2O = thiosulfate(in) + ADP + phosphate + H(+). Part of the ABC transporter complex CysAWTP involved in sulfate/thiosulfate import. Responsible for energy coupling to the transport system. The sequence is that of Sulfate/thiosulfate import ATP-binding protein CysA from Brucella melitensis biotype 1 (strain ATCC 23456 / CCUG 17765 / NCTC 10094 / 16M).